Here is a 1077-residue protein sequence, read N- to C-terminus: Eukaryotic translation initiation factor 2-alpha kinase pek-1 (1077 aa).

Positions 1–23 are cleaved as a signal peptide; it reads MSVYYIVLAGFLLFMALVPFNAG. At 24 to 453 the chain is on the lumenal side; that stretch reads QQYIDDDIEV…ITLMQTIFSY (430 aa). A glycan (N-linked (GlcNAc...) asparagine) is linked at asparagine 206. Residues 454-474 traverse the membrane as a helical segment; it reads IFNPTAVVSFLAGLIGVTVAV. Over 475 to 1077 the chain is Cytoplasmic; the sequence is VYNKIAKSSP…HEVATHKFLQ (603 aa). Residues 604-1076 enclose the Protein kinase domain; that stretch reads FEVKKVIGHG…AHEVATHKFL (473 aa). Residues 610–618 and lysine 633 contribute to the ATP site; that span reads IGHGGFGVV. Positions 727–834 are disordered; sequence MPPVVGNTTD…FVDGSDDVDN (108 aa). Residues 732–746 show a composition bias toward polar residues; the sequence is GNTTDAENSWSTSAK. Over residues 766-778 the composition is skewed to basic and acidic residues; it reads GSDRTTAELKEES. Residues 783–796 show a composition bias toward acidic residues; that stretch reads ESDEESDTTEDSSS. Low complexity predominate over residues 797-808; that stretch reads SDESPSSSSGSS. Catalysis depends on aspartate 933, which acts as the Proton acceptor.

The protein belongs to the protein kinase superfamily. Ser/Thr protein kinase family. GCN2 subfamily. In terms of assembly, forms dimers with HSPA5/BIP in resting cells. Oligomerizes in ER-stressed cells. In terms of processing, autophosphorylated. Post-translationally, N-glycosylated. In terms of tissue distribution, expressed in intestinal cells.

It localises to the endoplasmic reticulum membrane. It carries out the reaction L-seryl-[protein] + ATP = O-phospho-L-seryl-[protein] + ADP + H(+). It catalyses the reaction L-threonyl-[protein] + ATP = O-phospho-L-threonyl-[protein] + ADP + H(+). With respect to regulation, perturbation in protein folding in the endoplasmic reticulum (ER) promotes reversible dissociation from HSPA5/BIP and oligomerization, resulting in transautophosphorylation and kinase activity induction. In terms of biological role, phosphorylates the alpha subunit of eukaryotic translation-initiation factor 2 (eIF2alpha), leading to its inactivation and thus to a rapid reduction of translational initiation and repression of global protein synthesis. May phosphorylate eIF2alpha during hypoxia. Proposed to have a role in alleviating endoplasmic reticulum stress. In Caenorhabditis elegans, this protein is Eukaryotic translation initiation factor 2-alpha kinase pek-1 (pek-1).